The following is a 223-amino-acid chain: Translation initiation factor 6 (223 aa).

This sequence belongs to the eIF-6 family. In terms of assembly, associates with the 50S ribosomal subunit, specifically with protein L14. Binds to 23S rRNA, possibly between where the 30S and 50S subunits associate to initiate translation. Post-translationally, modified in an unknown fashion (not phosphorylation) following release from 50S ribosomal subunits.

Binds to the 50S ribosomal subunit and prevents its association with the 30S ribosomal subunit to form the 70S initiation complex. Inhibits translation of both leadered and leaderless mRNAs, maybe by binding to the 50S ribosome subunit, preventing it from binding to the 30S subunit. This Saccharolobus solfataricus (strain ATCC 35092 / DSM 1617 / JCM 11322 / P2) (Sulfolobus solfataricus) protein is Translation initiation factor 6.